Consider the following 196-residue polypeptide: Holliday junction branch migration complex subunit RuvA (196 aa).

A domain I region spans residues 1–63 (MLDFIKGEIV…EETHQLFGFI (63 aa)). The domain II stretch occupies residues 64 to 142 (DKKERQLFTH…PDNIPSSDTI (79 aa)). A flexible linker region spans residues 143-146 (ITNI). A domain III region spans residues 146–196 (ISSNITKEAITALITLGFSQSASQKVVNKIVSNNSSSTTIEQIIKKALKLL).

Belongs to the RuvA family. Homotetramer. Forms an RuvA(8)-RuvB(12)-Holliday junction (HJ) complex. HJ DNA is sandwiched between 2 RuvA tetramers; dsDNA enters through RuvA and exits via RuvB. An RuvB hexamer assembles on each DNA strand where it exits the tetramer. Each RuvB hexamer is contacted by two RuvA subunits (via domain III) on 2 adjacent RuvB subunits; this complex drives branch migration. In the full resolvosome a probable DNA-RuvA(4)-RuvB(12)-RuvC(2) complex forms which resolves the HJ.

Its subcellular location is the cytoplasm. In terms of biological role, the RuvA-RuvB-RuvC complex processes Holliday junction (HJ) DNA during genetic recombination and DNA repair, while the RuvA-RuvB complex plays an important role in the rescue of blocked DNA replication forks via replication fork reversal (RFR). RuvA specifically binds to HJ cruciform DNA, conferring on it an open structure. The RuvB hexamer acts as an ATP-dependent pump, pulling dsDNA into and through the RuvAB complex. HJ branch migration allows RuvC to scan DNA until it finds its consensus sequence, where it cleaves and resolves the cruciform DNA. This is Holliday junction branch migration complex subunit RuvA from Azobacteroides pseudotrichonymphae genomovar. CFP2.